Here is a 320-residue protein sequence, read N- to C-terminus: o-succinylbenzoate synthase (320 aa).

The active-site Proton donor is Lys-133. Mg(2+) contacts are provided by Asp-161, Glu-190, and Asp-213. Lys-235 (proton acceptor) is an active-site residue.

The protein belongs to the mandelate racemase/muconate lactonizing enzyme family. MenC type 1 subfamily. The cofactor is a divalent metal cation.

The enzyme catalyses (1R,6R)-6-hydroxy-2-succinyl-cyclohexa-2,4-diene-1-carboxylate = 2-succinylbenzoate + H2O. It functions in the pathway quinol/quinone metabolism; 1,4-dihydroxy-2-naphthoate biosynthesis; 1,4-dihydroxy-2-naphthoate from chorismate: step 4/7. Its pathway is quinol/quinone metabolism; menaquinone biosynthesis. Converts 2-succinyl-6-hydroxy-2,4-cyclohexadiene-1-carboxylate (SHCHC) to 2-succinylbenzoate (OSB). This is o-succinylbenzoate synthase from Salmonella heidelberg (strain SL476).